The following is a 229-amino-acid chain: Uracil-DNA glycosylase (229 aa).

Asp70 acts as the Proton acceptor in catalysis.

Belongs to the uracil-DNA glycosylase (UDG) superfamily. UNG family.

It is found in the cytoplasm. It carries out the reaction Hydrolyzes single-stranded DNA or mismatched double-stranded DNA and polynucleotides, releasing free uracil.. Functionally, excises uracil residues from the DNA which can arise as a result of misincorporation of dUMP residues by DNA polymerase or due to deamination of cytosine. This Chlamydia trachomatis serovar A (strain ATCC VR-571B / DSM 19440 / HAR-13) protein is Uracil-DNA glycosylase.